The following is a 472-amino-acid chain: Glutamate--tRNA ligase 2 (472 aa).

Positions 12–22 (PSPSGLLHLGN) match the 'HIGH' region motif. The 'KMSKS' region motif lies at 253–257 (PLSKR). Residue Lys256 coordinates ATP.

This sequence belongs to the class-I aminoacyl-tRNA synthetase family. Glutamate--tRNA ligase type 1 subfamily. Monomer.

The protein localises to the cytoplasm. The catalysed reaction is tRNA(Glu) + L-glutamate + ATP = L-glutamyl-tRNA(Glu) + AMP + diphosphate. Catalyzes the attachment of glutamate to tRNA(Glu) in a two-step reaction: glutamate is first activated by ATP to form Glu-AMP and then transferred to the acceptor end of tRNA(Glu). This Nitrosococcus oceani (strain ATCC 19707 / BCRC 17464 / JCM 30415 / NCIMB 11848 / C-107) protein is Glutamate--tRNA ligase 2.